Here is a 434-residue protein sequence, read N- to C-terminus: UDP-N-acetylmuramoyl-L-alanyl-D-glutamate--2,6-diaminopimelate ligase (434 aa).

Ser17 contacts UDP-N-acetyl-alpha-D-muramoyl-L-alanyl-D-glutamate. Residue 68–74 (GTNGKTT) participates in ATP binding. UDP-N-acetyl-alpha-D-muramoyl-L-alanyl-D-glutamate is bound by residues 111 to 112 (TT), Ser138, Gln144, and Arg146. Lys178 carries the N6-carboxylysine modification. Residues Arg326, 350–353 (DNPR), Gly401, and Glu405 each bind meso-2,6-diaminopimelate. Positions 350–353 (DNPR) match the Meso-diaminopimelate recognition motif motif.

It belongs to the MurCDEF family. MurE subfamily. It depends on Mg(2+) as a cofactor. In terms of processing, carboxylation is probably crucial for Mg(2+) binding and, consequently, for the gamma-phosphate positioning of ATP.

It is found in the cytoplasm. The catalysed reaction is UDP-N-acetyl-alpha-D-muramoyl-L-alanyl-D-glutamate + meso-2,6-diaminopimelate + ATP = UDP-N-acetyl-alpha-D-muramoyl-L-alanyl-gamma-D-glutamyl-meso-2,6-diaminopimelate + ADP + phosphate + H(+). It participates in cell wall biogenesis; peptidoglycan biosynthesis. In terms of biological role, catalyzes the addition of meso-diaminopimelic acid to the nucleotide precursor UDP-N-acetylmuramoyl-L-alanyl-D-glutamate (UMAG) in the biosynthesis of bacterial cell-wall peptidoglycan. The protein is UDP-N-acetylmuramoyl-L-alanyl-D-glutamate--2,6-diaminopimelate ligase of Wolinella succinogenes (strain ATCC 29543 / DSM 1740 / CCUG 13145 / JCM 31913 / LMG 7466 / NCTC 11488 / FDC 602W) (Vibrio succinogenes).